Here is a 769-residue protein sequence, read N- to C-terminus: Serine/threonine-protein kinase PLK4 (769 aa).

One can recognise a Protein kinase domain in the interval 14–267 (YEVQHLLGKG…LEAVLCHPFM (254 aa)). Residues 20–28 (LGKGGFATV) and K43 each bind ATP. The active-site Proton acceptor is the D138. Positions 381–498 (EDRISVPPLN…ARFVGLVKSK (118 aa)) constitute a Cryptic POLO box 1 (CPB1) domain. The 104-residue stretch at 499–602 (TPKVTYFSTL…GRRPITDVQP (104 aa)) folds into the Cryptic POLO box 2 (CPB2) domain. Residues 660 to 739 (PIKRINVPDI…IPNIQLKLKT (80 aa)) enclose the POLO box domain.

This sequence belongs to the protein kinase superfamily. Ser/Thr protein kinase family. CDC5/Polo subfamily. As to quaternary structure, homodimer. Ubiquitinated by the SCF(Slimb) ubiquitin ligase complex; leading to its degradation by the proteasome during interphase and regulating centriole number and ensuring the block to centriole reduplication.

Its subcellular location is the cytoplasm. The protein resides in the cytoskeleton. It localises to the microtubule organizing center. It is found in the centrosome. The protein localises to the centriole. It carries out the reaction L-seryl-[protein] + ATP = O-phospho-L-seryl-[protein] + ADP + H(+). The catalysed reaction is L-threonyl-[protein] + ATP = O-phospho-L-threonyl-[protein] + ADP + H(+). In terms of biological role, serine/threonine-protein kinase that plays a central role in centriole duplication. Able to trigger procentriole formation on the surface of the mother centriole cylinder, using mother centriole as a platform, leading to the recruitment of centriole biogenesis proteins such as sas-6. When overexpressed, it is able to induce centrosome amplification through the simultaneous generation of multiple procentrioles adjoining each parental centriole during S phase. Centrosome amplification following overexpression can initiate tumorigenesis, highlighting the importance of centrosome regulation in cancers. In Drosophila sechellia (Fruit fly), this protein is Serine/threonine-protein kinase PLK4 (SAK).